The primary structure comprises 472 residues: Protein c-ets-2-B (472 aa).

In terms of domain architecture, PNT spans 85-170; it reads DTFNGFAKER…EHLEEMMKEY (86 aa). The segment at residues 366-446 is a DNA-binding region (ETS); sequence IQLWQFLLEL…SGKRYVYRFV (81 aa).

This sequence belongs to the ETS family.

It localises to the nucleus. Functionally, probable transcription factor. This chain is Protein c-ets-2-B (ets2-b), found in Xenopus laevis (African clawed frog).